The chain runs to 238 residues: Major prion protein (238 aa).

An N-terminal signal peptide occupies residues 1–15 (MLVLFVATWSDLGLC). Residues 16–215 (KKRPKPGGWN…ESQAYYQRGS (200 aa)) form an interaction with GRB2, ERI3 and SYN1 region. The disordered stretch occupies residues 18–93 (RPKPGGWNTG…WHKPSKPKTS (76 aa)). 4 repeat units span residues 44–52 (PQGGGGWGQ), 53–60 (PHGGGWGQ), 61–68 (PHGGGWGQ), and 69–76 (PHGGGWGQ). A 4 X 8 AA tandem repeats of P-H-G-G-G-W-G-Q region spans residues 44–76 (PQGGGGWGQPHGGGWGQPHGGGWGQPHGGGWGQ). The segment covering 45 to 80 (QGGGGWGQPHGGGWGQPHGGGWGQPHGGGWGQGGGT) has biased composition (gly residues). 11 residues coordinate Cu(2+): G47, G48, H54, G55, G56, H62, G63, G64, H70, G71, and G72. A compositionally biased stretch (basic residues) spans 83-93 (QWHKPSKPKTS). A disulfide bond links C164 and C199. 2 N-linked (GlcNAc...) asparagine glycosylation sites follow: N166 and N182. A lipid anchor (GPI-anchor amidated serine) is attached at S215. Residues 216–238 (SMVLFSSPPVILLISFLIFLIVG) constitute a propeptide, removed in mature form.

Belongs to the prion family. Monomer and homodimer. Has a tendency to aggregate into amyloid fibrils containing a cross-beta spine, formed by a steric zipper of superposed beta-strands. Soluble oligomers may represent an intermediate stage on the path to fibril formation. Copper binding may promote oligomerization. Interacts with GRB2, APP, ERI3/PRNPIP and SYN1. Mislocalized cytosolically exposed PrP interacts with MGRN1; this interaction alters MGRN1 subcellular location and causes lysosomal enlargement. Interacts with KIAA1191.

The protein localises to the cell membrane. It localises to the golgi apparatus. Functionally, its primary physiological function is unclear. Has cytoprotective activity against internal or environmental stresses. May play a role in neuronal development and synaptic plasticity. May be required for neuronal myelin sheath maintenance. May play a role in iron uptake and iron homeostasis. Soluble oligomers are toxic to cultured neuroblastoma cells and induce apoptosis (in vitro). Association with GPC1 (via its heparan sulfate chains) targets PRNP to lipid rafts. Also provides Cu(2+) or Zn(2+) for the ascorbate-mediated GPC1 deaminase degradation of its heparan sulfate side chains. In Macaca sylvanus (Barbary macaque), this protein is Major prion protein (PRNP).